The primary structure comprises 355 residues: C-C chemokine receptor type 1 (355 aa).

At 1–34 the chain is on the extracellular side; it reads MEISDFTEAYPTTTEFDYGDSTPCQKTAVRAFGA. Residues 35 to 60 traverse the membrane as a helical segment; it reads GLLPPLYSLVFIIGVVGNVLVILVLM. Residues 61 to 64 are Cytoplasmic-facing; sequence QHRR. A helical transmembrane segment spans residues 65–91; it reads LQSMTSIYLFNLAVSDLVFLFTLPFWI. Topologically, residues 92 to 107 are extracellular; the sequence is DYKLKDDWIFGDAMCK. The cysteines at positions 106 and 183 are disulfide-linked. Residues 108-129 form a helical membrane-spanning segment; it reads LLSGFYYLGLYSEIFFIILLTI. Residues 130-146 are Cytoplasmic-facing; the sequence is DRYLAIVHAVFALRART. A helical membrane pass occupies residues 147 to 171; the sequence is VTFGIITSIITWALAILASMPALYF. The Extracellular portion of the chain corresponds to 172-197; the sequence is FKAQWEFTHRTCSPHFPYKSLKQWKR. The helical transmembrane segment at 198–223 threads the bilayer; that stretch reads FQALKLNLLGLILPLLVMIICYAGII. At 224-239 the chain is on the cytoplasmic side; that stretch reads RILLRRPSEKKVKAVR. Residues 240–264 traverse the membrane as a helical segment; sequence LIFAITLLFFLLWTPYNLSVFVSAF. Residues 265-281 lie on the Extracellular side of the membrane; that stretch reads QDVLFTNQCEQSKQLDL. A helical transmembrane segment spans residues 282–305; sequence AMQVTEVIAYTHCCVNPIIYVFVG. Residues 306–355 are Cytoplasmic-facing; it reads ERFWKYLRQLFQRHVAIPLAKWLPFLSVDQLERTSSISPSTGEHELSAGF.

Belongs to the G-protein coupled receptor 1 family. In terms of assembly, interacts with CREB3. Interacts with CCL3. Interacts with CCL15. Interacts with CCL23. Interacts with GNAI1. Interacts with PF4/CXCL4. Detected in the heart, spleen, lung, peritoneal exudate cells and leukocytes.

It is found in the cell membrane. In terms of biological role, chemokine receptor that plays a crucial role in regulating immune cell migration, inflammation, and immune responses. Contributes to the inflammatory response by recruiting immune cells, such as monocytes, macrophages, T-cells, and dendritic cells, to sites of inflammation for the clearance of pathogens and the resolution of tissue damage. When activated by its ligands including CCL3, CCL5-9, CCL13-16 and CCL23, triggers a signaling cascade within immune cells, leading to their migration towards the source of the chemokine. For example, mediates neutrophil migration after activation by CCL3 leading to the sequential release of TNF-alpha and leukotriene B4. Also mediates monocyte migration upon CXCL4 binding. Activation by CCL5 results in neuroinflammation through the ERK1/2 signaling pathway. In Mus musculus (Mouse), this protein is C-C chemokine receptor type 1 (Ccr1).